Here is a 333-residue protein sequence, read N- to C-terminus: 2-oxoglutarate-dependent dioxygenase ucsF (333 aa).

Residues Asn174 to Ala296 enclose the Fe2OG dioxygenase domain. Residues His202, Asp204, and His264 each coordinate Fe cation. Position 287 (Arg287) interacts with 2-oxoglutarate.

This sequence belongs to the iron/ascorbate-dependent oxidoreductase family. The cofactor is Fe(2+).

Its pathway is mycotoxin biosynthesis. Functionally, 2-oxoglutarate-dependent dioxygenase; part of the gene cluster that mediates the biosynthesis of UCS1025A, a member of the pyrrolizidinone family that acts as a strong telomerase inhibitor and displays potent antibacterial and antitumor properties. These compounds share a hemiaminal-containing pyrrolizidinone core fused with a gamma-lactone, giving a furopyrrolizidine that is connected to a decalin fragment. The polyketide synthase module (PKS) of the PKS-NRPS ucsA is responsible for the synthesis of the polyketide backbone via the condensation of an acetyl-CoA starter unit with 6 malonyl-CoA units. The downstream nonribosomal peptide synthetase (NRPS) module then amidates the carboxyl end of the polyketide with a 2S,3S-methylproline derived from L-isoleucine by the 2-oxoglutarate-dependent dioxygenase ucsF which converts L-isoleucine to (4S,5S)-4-methylpyrroline-5-carboxylate that is further converted to 2S,3S-methylproline by the pyrroline-5-carboxylate reductase ucsG. Reductive release of the completed aminoacyl polyketide from the assembly line can form the 3-pyrrolin-2-one structure via an intramolecular Knoevenagel reaction. Because ucsA lacks a designated enoylreductase (ER) domain, the required activity is provided the enoyl reductase ucsL. This keto acyclic precursor is the substrate of the Diels-Alderase ucsH, that catalyzes the Diels-Alder cycloaddition. Oxidation of the 3S-methyl group to a carboxylate by the cytochrome P450 monooxygenase ucsK allows an oxa-Michael cyclization that might involve the reductase/dehydrogenase ucsI and which furnishes the furopyrrolizidine. The oxidase ucsJ likely plays a critical role in stereoselective reduction of the C5-C6 double bond to afford the required R-configured carboxylate group. Further enolization and oxidation at C5 by an unidentified enzyme affords the last intermediate that can undergo oxa-Michael cyclization to yield UCS1025A. This Acremonium sp protein is 2-oxoglutarate-dependent dioxygenase ucsF.